The primary structure comprises 1647 residues: Transcription elongation factor SPT6 homolog (1647 aa).

Residues 1–209 (MARNAISDDE…SKKKKYRQGS (209 aa)) form a disordered region. Positions 7–20 (SDDEEDHELEDDDG) are enriched in acidic residues. The segment covering 21 to 30 (EPVHGDPAEH) has biased composition (basic and acidic residues). Residues 31 to 67 (DENDDEEDDDDVGNEYENDGFIVNDEDEEEEEEEDEE) show a composition bias toward acidic residues. Positions 103–114 (KFKKRQYKRLKK) are enriched in basic residues. The span at 132 to 151 (DSRGGTRRSAEDKIKDRLFD) shows a compositional bias: basic and acidic residues. The span at 152 to 191 (DVDVDDPPDDVGDEEDLVVEEDVVGSEDEMADFIVDEDDE) shows a compositional bias: acidic residues. In terms of domain architecture, S1 motif spans 1103 to 1174 (GRIVQASVRR…QRYQVFLICK (72 aa)). Residues 1429–1647 (PMRSPADHGS…RKSDGGGGGW (219 aa)) are disordered. Tandem repeats lie at residues 1443–1444 (GW) and 1452–1453 (GW). A 12 X 2 AA repeats of [WG]-[GW] repeats region spans residues 1443–1647 (GWGSSQSEGG…RKSDGGGGGW (205 aa)). The segment covering 1462-1471 (SGRGGEYRNG) has biased composition (gly residues). Residues 1496 to 1507 (RRDDMNSDRQDG) show a composition bias toward basic and acidic residues. Repeat copies occupy residues 1511–1512 (WG), 1522–1523 (GW), 1530–1531 (GW), 1547–1548 (GW), 1563–1564 (WG), and 1574–1575 (GW). Composition is skewed to gly residues over residues 1519–1532 (ADGGWGNSGGGGWG), 1539–1552 (KTGGGSTGGWGSES), 1561–1579 (GSWGSGSGGGGSGGWGNDS), and 1588–1600 (GGFGSGSGGGGSD). 4 tandem repeats follow at residues 1601–1602 (WG), 1615–1616 (GW), 1630–1631 (GW), and 1646–1647 (GW).

This sequence belongs to the SPT6 family. In terms of assembly, interacts (via N-terminus) with IWS1. As to expression, expressed in shoot apical meristem, leaf primordia, vasculature of young leaves, inflorescence meristem, floral meristem, young floral organs, developing ovules and anthers.

Its subcellular location is the nucleus. Its function is as follows. Transcription elongation factor that enhances the transcription elongation by RNA polymerase II (RNAPII). Plays an important role in regulating embryo apical and basal patterning during early embryogenesis, partly through negative regulation of the transcription factors PHABULOSA and PHAVOLUTA. This chain is Transcription elongation factor SPT6 homolog, found in Arabidopsis thaliana (Mouse-ear cress).